A 368-amino-acid chain; its full sequence is Protein RecA (368 aa).

Position 80-87 (80-87 (GPESSGKT)) interacts with ATP. The segment covering 344–353 (NPTFTATPDS) has biased composition (polar residues). Positions 344–368 (NPTFTATPDSENADNADDEFSEEEL) are disordered. Over residues 354–368 (ENADNADDEFSEEEL) the composition is skewed to acidic residues.

This sequence belongs to the RecA family.

It is found in the cytoplasm. Its function is as follows. Can catalyze the hydrolysis of ATP in the presence of single-stranded DNA, the ATP-dependent uptake of single-stranded DNA by duplex DNA, and the ATP-dependent hybridization of homologous single-stranded DNAs. It interacts with LexA causing its activation and leading to its autocatalytic cleavage. The chain is Protein RecA from Mannheimia haemolytica (Pasteurella haemolytica).